A 120-amino-acid polypeptide reads, in one-letter code: U13-barytoxin-Tl1a (120 aa).

A signal peptide spans 1–20 (MKTIIVFLSLLVLATKFGDA). 3 disulfides stabilise this stretch: C75-C90, C82-C95, and C89-C109.

Belongs to the neurotoxin 14 (magi-1) family. 05 (ICK-7) subfamily. ICK-7 sub-subfamily. Expressed by the venom gland.

Its subcellular location is the secreted. Ion channel inhibitor. This is U13-barytoxin-Tl1a from Trittame loki (Brush-footed trapdoor spider).